The following is a 585-amino-acid chain: Arginine--tRNA ligase (585 aa).

The short motif at 126-136 (PNIAKEMHVGH) is the 'HIGH' region element.

Belongs to the class-I aminoacyl-tRNA synthetase family. Monomer.

Its subcellular location is the cytoplasm. It catalyses the reaction tRNA(Arg) + L-arginine + ATP = L-arginyl-tRNA(Arg) + AMP + diphosphate. This chain is Arginine--tRNA ligase, found in Cyanothece sp. (strain PCC 7425 / ATCC 29141).